The sequence spans 457 residues: Argininosuccinate lyase (457 aa).

Belongs to the lyase 1 family. Argininosuccinate lyase subfamily.

It localises to the cytoplasm. The catalysed reaction is 2-(N(omega)-L-arginino)succinate = fumarate + L-arginine. The protein operates within amino-acid biosynthesis; L-arginine biosynthesis; L-arginine from L-ornithine and carbamoyl phosphate: step 3/3. This Klebsiella pneumoniae (strain 342) protein is Argininosuccinate lyase.